We begin with the raw amino-acid sequence, 209 residues long: Protease (209 aa).

Active-site residues include H55, D72, and C123.

It belongs to the peptidase C5 family. Interacts with protease cofactor pVI-C; this interaction is necessary for protease activation.

The protein localises to the virion. Its subcellular location is the host nucleus. The catalysed reaction is Cleaves proteins of the adenovirus and its host cell at two consensus sites: -Yaa-Xaa-Gly-Gly-|-Xaa- and -Yaa-Xaa-Gly-Xaa-|-Gly- (in which Yaa is Met, Ile or Leu, and Xaa is any amino acid).. With respect to regulation, requires DNA and protease cofactor for maximal activation. Inside nascent virions, becomes partially activated by binding to the viral DNA, allowing it to cleave the cofactor that binds to the protease and fully activates it. Actin, like the viral protease cofactor, seems to act as a cofactor in the cleavage of cytokeratin 18 and of actin itself. Cleaves viral precursor proteins (pTP, pIIIa, pVI, pVII, pVIII, and pX) inside newly assembled particles giving rise to mature virions. Protease complexed to its cofactor slides along the viral DNA to specifically locate and cleave the viral precursors. Mature virions have a weakened organization compared to the unmature virions, thereby facilitating subsequent uncoating. Without maturation, the particle lacks infectivity and is unable to uncoat. Late in adenovirus infection, in the cytoplasm, may participate in the cytoskeleton destruction. Cleaves host cell cytoskeletal keratins K7 and K18. In Human adenovirus D serotype 9 (HAdV-9), this protein is Protease.